The sequence spans 442 residues: O-methyltransferase pgmB (442 aa).

Aspartate 291 provides a ligand contact to S-adenosyl-L-methionine. Residue histidine 341 is the Proton acceptor of the active site.

The protein belongs to the class I-like SAM-binding methyltransferase superfamily. Cation-independent O-methyltransferase family.

It functions in the pathway pigment biosynthesis. The protein operates within secondary metabolite biosynthesis. Its function is as follows. O-methyltransferase; part of the gene cluster that mediates the biosynthesis of pleosporalin A, ascomycone A, as well as a third cryptic naphthoquinone derived pigment, all responsible for the coloration of conidia. Specifically methylates position C-6 of the pgmA product 3-acetonyl-1,6,8-trihydroxy-2-naphthaldehyde to yield fusarubinaldehyde. The pathway begins with the biosynthesis of the cyclized heptaketide 3-acetonyl-1,6,8-trihydroxy-2-naphthaldehyde by the NR-PKS pgmA. The C-6 hydroxyl group is further methylated by the O-methyltransferase pgmB to yield fusarubinaldehyde which is in turn oxidized by the cytochrome P450 monooxygenase pgmC at C-9. The C-1 hydroxyl group is then methylated spontaneously. Although pgmE, pgmD and pgmH are essential for the production of pleosporalin A, it is not the case for the 2 other final products and it remains difficult to assign a specific function to each enzyme. PgmF and pgmG seem not to be involved in pigment biosynthesis although they were regulated by the cluster-specific transcription factor pgmR. This chain is O-methyltransferase pgmB, found in Aspergillus terreus.